Reading from the N-terminus, the 208-residue chain is Uracil phosphoribosyltransferase (208 aa).

Residues arginine 78, arginine 103, and 130 to 138 each bind 5-phospho-alpha-D-ribose 1-diphosphate; that span reads DPMLATGGS. Uracil contacts are provided by residues isoleucine 193 and 198–200; that span reads GDA. Aspartate 199 is a binding site for 5-phospho-alpha-D-ribose 1-diphosphate.

It belongs to the UPRTase family. It depends on Mg(2+) as a cofactor.

It catalyses the reaction UMP + diphosphate = 5-phospho-alpha-D-ribose 1-diphosphate + uracil. The protein operates within pyrimidine metabolism; UMP biosynthesis via salvage pathway; UMP from uracil: step 1/1. With respect to regulation, allosterically activated by GTP. Functionally, catalyzes the conversion of uracil and 5-phospho-alpha-D-ribose 1-diphosphate (PRPP) to UMP and diphosphate. The polypeptide is Uracil phosphoribosyltransferase (Neisseria meningitidis serogroup C (strain 053442)).